Consider the following 499-residue polypeptide: Serine/threonine-protein phosphatase 5 (499 aa).

Residues 1–23 (MAMAEGERTECAEPPRDEPPADG) are disordered. At alanine 2 the chain carries N-acetylalanine. 3 TPR repeats span residues 28 to 61 (AEELKTQANDYFKAKDYENAIKFYSQAIELNPSN), 62 to 95 (AIYYGNRSLAYLRTECYGYALGDATRAIELDKKY), and 96 to 129 (IKGYYRRAASNMALGKFRAALRDYETVVKVKPHD). The catalytic stretch occupies residues 184-499 (GKVTISFMKE…ANTLLQLGMM (316 aa)). Aspartate 242, histidine 244, and aspartate 271 together coordinate Mn(2+). Histidine 244 lines the substrate pocket. Substrate-binding positions include arginine 275 and 303–304 (NH). Asparagine 303 lines the Mn(2+) pocket. Histidine 304 functions as the Proton donor/acceptor in the catalytic mechanism. Residue histidine 352 coordinates Mn(2+). Arginine 400 and histidine 427 together coordinate substrate. Histidine 427 serves as a coordination point for Mn(2+). A required for autoinhibition region spans residues 495-499 (QLGMM).

The protein belongs to the PPP phosphatase family. PP-5 (PP-T) subfamily. Probably forms a complex composed of chaperones HSP90 and HSP70, co-chaperones STIP1/HOP, CDC37, PPP5C, PTGES3/p23, TSC1 and client protein TSC2. Probably forms a complex composed of chaperones HSP90 and HSP70, co-chaperones CDC37, PPP5C, TSC1 and client protein TSC2, CDK4, AKT, RAF1 and NR3C1; this complex does not contain co-chaperones STIP1/HOP and PTGES3/p23. Part of a complex with HSP90/HSP90AA1 and steroid receptors. Interacts (via TPR repeats) with HSP90AA1 (via TPR repeat-binding motif) or HSPA1A/HSPA1B; the interaction is direct and activates the phosphatase activity. Dissociates from HSPA1A/HSPA1B and HSP90AA1 in response to arachidonic acid. Interacts with CPNE1 (via VWFA domain). Interacts with CDC16, CDC27. Interacts with KLHDC10 (via the 6 Kelch repeats); inhibits the phosphatase activity on MAP3K5. Interacts with ATM and ATR; both interactions are induced by DNA damage and enhance ATM and ATR kinase activity. Interacts with RAD17; reduced by DNA damage. Interacts with nuclear receptors such as NR3C1/GCR and PPARG (activated by agonist); regulates their transactivation activities. Interacts (via TPR repeats) with S100 proteins S100A1, S100A2, S100A6, S100B and S100P; the interactions are calcium-dependent, strongly activate PPP5C phosphatase activity and compete with HSP90AA1 and MAP3K5 interactions. Interacts with SMAD2 and SMAD3 but not with SMAD1; decreases SMAD3 phosphorylation and protein levels. Interacts (via TPR repeats) with CRY1 and CRY2; the interaction with CRY2 down-regulates the phosphatase activity on CSNK1E. Interacts (via TPR repeats) with the active form of RAC1, GNA12 or GNA13; these interactions activate the phosphatase activity and translocate PPP5C to the cell membrane. Interacts with FLCN. The cofactor is Mg(2+). Mn(2+) is required as a cofactor. Post-translationally, activated by at least two different proteolytic cleavages producing a 56 kDa and a 50 kDa form. Ubiquitous.

Its subcellular location is the nucleus. It localises to the cytoplasm. It is found in the cell membrane. The enzyme catalyses O-phospho-L-seryl-[protein] + H2O = L-seryl-[protein] + phosphate. The catalysed reaction is O-phospho-L-threonyl-[protein] + H2O = L-threonyl-[protein] + phosphate. With respect to regulation, autoinhibited. In the autoinhibited state, the TPR domain interacts with the catalytic region and prevents substrate access to the catalytic pocket. Allosterically activated by various polyunsaturated fatty acids, free long-chain fatty-acids and long-chain fatty acyl-CoA esters, arachidonic acid being the most effective activator. HSP90A and probably RAC1, GNA12 and GNA13 can also release the autoinhibition by the TPR repeat. Activation by RAC1, GNA12 and GNA13 is synergistic with the one produced by fatty acids binding. Inhibited by okadaic acid. Serine/threonine-protein phosphatase that dephosphorylates a myriad of proteins involved in different signaling pathways including the kinases CSNK1E, ASK1/MAP3K5, PRKDC and RAF1, the nuclear receptors NR3C1, PPARG, ESR1 and ESR2, SMAD proteins and TAU/MAPT. Implicated in wide ranging cellular processes, including apoptosis, differentiation, DNA damage response, cell survival, regulation of ion channels or circadian rhythms, in response to steroid and thyroid hormones, calcium, fatty acids, TGF-beta as well as oxidative and genotoxic stresses. Participates in the control of DNA damage response mechanisms such as checkpoint activation and DNA damage repair through, for instance, the regulation ATM/ATR-signaling and dephosphorylation of PRKDC and TP53BP1. Inhibits ASK1/MAP3K5-mediated apoptosis induced by oxidative stress. Plays a positive role in adipogenesis, mainly through the dephosphorylation and activation of PPARG transactivation function. Also dephosphorylates and inhibits the anti-adipogenic effect of NR3C1. Regulates the circadian rhythms, through the dephosphorylation and activation of CSNK1E. May modulate TGF-beta signaling pathway by the regulation of SMAD3 phosphorylation and protein expression levels. Dephosphorylates and may play a role in the regulation of TAU/MAPT. Through their dephosphorylation, may play a role in the regulation of ions channels such as KCNH2. Dephosphorylate FNIP1, disrupting interaction with HSP90AA1/Hsp90. The sequence is that of Serine/threonine-protein phosphatase 5 (PPP5C) from Homo sapiens (Human).